Reading from the N-terminus, the 603-residue chain is Spastin (603 aa).

A disordered region spans residues 1 to 34 (MNSPGGRNNKKKPVTPAAETGPGPPTPPPPPAET). Over 1–54 (MNSPGGRNNKKKPVTPAAETGPGPPTPPPPPAETQVLLAPPSLHKRNLYLFSYP) the chain is Cytoplasmic. The span at 22-32 (PGPPTPPPPPA) shows a compositional bias: pro residues. The helical intramembrane region spans 55–75 (LLAAFSLLRFLAFQLGLLFVW). Over 76–603 (FCERLSRRVM…WNKEFGDTTV (528 aa)) the chain is Cytoplasmic. The 76-residue stretch at 113-188 (YHQQAFQYIS…LMAKDRLQLL (76 aa)) folds into the MIT domain. The segment at 216–294 (GLLKPEKGAV…RTNKPTTPTT (79 aa)) is disordered. Residues 219–231 (KPEKGAVPKKKDP) show a composition bias toward basic and acidic residues. Low complexity predominate over residues 281-294 (KNNTRTNKPTTPTT). An ATP-binding site is contributed by 369–376 (GPPGNGKT).

Belongs to the AAA ATPase family. Spastin subfamily. Homohexamer. The homohexamer is stabilized by ATP-binding. The homohexamer may adopt a ring conformation through which microtubules pass prior to being severed. Interacts with microtubules.

The protein localises to the membrane. It localises to the cytoplasm. Its subcellular location is the cytoskeleton. It is found in the microtubule organizing center. The protein resides in the centrosome. The protein localises to the perinuclear region. It localises to the nucleus. The enzyme catalyses n ATP + n H2O + a microtubule = n ADP + n phosphate + (n+1) alpha/beta tubulin heterodimers.. Its function is as follows. ATP-dependent microtubule severing protein that specifically recognizes and cuts microtubules that are polyglutamylated. Preferentially recognizes and acts on microtubules decorated with short polyglutamate tails: severing activity increases as the number of glutamates per tubulin rises from one to eight, but decreases beyond this glutamylation threshold. Microtubule severing promotes reorganization of cellular microtubule arrays and the release of microtubules from the centrosome following nucleation. Required for membrane traffic from the endoplasmic reticulum (ER) to the Golgi and for completion of the abscission stage of cytokinesis. Also plays a role in axon growth and the formation of axonal branches. This is Spastin from Xenopus tropicalis (Western clawed frog).